The primary structure comprises 111 residues: MFKATARYIRVQPRKARLAAGLMRNLSVMEAQKQLSFSQLKAGRCLKKVLDSAVANAELNENVKREQLNVIEVRVDAGPVYKRTKSKSRGGRSPILKRTSHLTVIVGERER.

The protein belongs to the universal ribosomal protein uL22 family. In terms of assembly, part of the 50S ribosomal subunit.

Its function is as follows. This protein binds specifically to 23S rRNA; its binding is stimulated by other ribosomal proteins, e.g. L4, L17, and L20. It is important during the early stages of 50S assembly. It makes multiple contacts with different domains of the 23S rRNA in the assembled 50S subunit and ribosome. The globular domain of the protein is located near the polypeptide exit tunnel on the outside of the subunit, while an extended beta-hairpin is found that lines the wall of the exit tunnel in the center of the 70S ribosome. The chain is Large ribosomal subunit protein uL22 from Chlamydia felis (strain Fe/C-56) (Chlamydophila felis).